A 792-amino-acid polypeptide reads, in one-letter code: Phenylalanine--tRNA ligase beta subunit (792 aa).

The region spanning 39–150 (GDEITNVVTG…ENTPIGKDIK (112 aa)) is the tRNA-binding domain. The 76-residue stretch at 404–479 (SEPNIVEVDY…RIYGYNKVPS (76 aa)) folds into the B5 domain. Asp457, Asp463, Glu466, and Glu467 together coordinate Mg(2+). Residues 699–792 (PKFPTVTRDI…LEHVLGAELR (94 aa)) form the FDX-ACB domain.

The protein belongs to the phenylalanyl-tRNA synthetase beta subunit family. Type 1 subfamily. As to quaternary structure, tetramer of two alpha and two beta subunits. Mg(2+) serves as cofactor.

It localises to the cytoplasm. It carries out the reaction tRNA(Phe) + L-phenylalanine + ATP = L-phenylalanyl-tRNA(Phe) + AMP + diphosphate + H(+). This is Phenylalanine--tRNA ligase beta subunit from Clostridium acetobutylicum (strain ATCC 824 / DSM 792 / JCM 1419 / IAM 19013 / LMG 5710 / NBRC 13948 / NRRL B-527 / VKM B-1787 / 2291 / W).